The following is a 120-amino-acid chain: Glycophorin-A (120 aa).

The residue at position 1 (glutamine 1) is a Pyrrolidone carboxylic acid. The segment at 1–40 is disordered; it reads QTIATGSPPIAGTSDLSTITSAATPTFTTEQDGREQGDGL. O-linked (GalNAc...) threonine glycans are attached at residues threonine 2 and threonine 5. Serine 7 carries O-linked (GalNAc...) serine glycosylation. Threonine 13 is a glycosylation site (O-linked (GalNAc...) threonine). A glycan (O-linked (GalNAc...) serine) is linked at serine 17. The segment covering 17–29 has biased composition (low complexity); that stretch reads STITSAATPTFTT. O-linked (GalNAc...) threonine glycans are attached at residues threonine 18 and threonine 20. O-linked (GalNAc...) serine glycosylation is present at serine 21. Residues threonine 24 and threonine 28 are each glycosylated (O-linked (GalNAc...) threonine). Residues 50–72 traverse the membrane as a helical segment; it reads VITVIILGVMAGIIGIILLLAYV. Residues 78-120 form a disordered region; that stretch reads KRPPADVPPPASTVPSADAPPPVSEDDETSLTSVETDYPGDSQ. Residues 82–100 are compositionally biased toward pro residues; it reads ADVPPPASTVPSADAPPPV. Residues 107–120 are compositionally biased toward polar residues; the sequence is SLTSVETDYPGDSQ. At serine 119 the chain carries Phosphoserine.

Belongs to the glycophorin-A family. In terms of assembly, homodimer.

The protein localises to the membrane. Glycophorin A is the major intrinsic membrane sialoglycoprotein of the erythrocyte. Appears to be important for the function of SLC4A1 and is required for high activity of SLC4A1. May be involved in translocation of SLC4A1 to the plasma membrane. This Equus caballus (Horse) protein is Glycophorin-A.